Consider the following 932-residue polypeptide: MTTGFLQKIFGSRNQRLVKQYQKTVAAINALETQIEKLTDDQLRGKTDEFRQRVAAGESLDKLLPEAFAVCREASRRVLKMRHFDVQLIGGMVLHYGKIAEMRTGEGKTLVATLPVYLNALSGRGVHVVTVNDYLAQRDAEWMARLYNFLGLSVGINLSGMEHDQKQQAYAADITYGTNNEFGFDYLRDNMVYETGARVQRALNFAVVDEVDSILIDEARTPLIISGQAEDHTELYVRMNALPPLLERQIGEEKADGTGVEKPGDYTLDEKSRQVFLTESGHEKAERLLAEWGLIGEGESLYAPQNITLMHHVYAALRAHTLFHKDQHYVVQNGEVVIVDEFTGRLMAGRRWSDGLHQAVEAKEHVKIQSENQTLASITFQNYFRMYAKLAGMTGTADTEAYEFNEIYGLETVVIPTNRPPKRIDKQDQIYKTAKERYDAVIRDIRDCYERGQPVLVGTTSIENSELLSHLLKQAGLPHEVLNAKQHEREAAIVAEAGRPRAITIATNMAGRGTDIVLGGNVEKQAAFIEADESIPADEKARRIQQLHDEWESLHEQVKAAGGLHIIGTERHESRRIDNQLRGRAGRQGDPGSSRFYLSLDDPLLRIFAGDRVRAIMDRLKMPEGEAIEAGIVTRSIESAQRKVEARNFDIRKQLLEYDDVANDQRKVIYQQRNELLEAHDITETITAMRHSVIADVVRQFVPEGSIEEQWDVPELEEALRNDWQLDLAIQEMVNESSSITADEILDAVTTAADEQYEAKVALVGRESFSAFERSVMLQTVDRLWREHLAALDHLRQGIHLRGYAQKNPKQEYKREAFELFAAMLEAIKQEVTRIVMNVQIQSPEQLEEAAEQIEERSSHLENVEYQHAEFAEAGAPAAGGAAVAAATATADMVGSAMAHSGPGGEMPKVGRNDPCPCGSGKKYKHCHGKLS.

ATP is bound by residues Gln-87, 105-109 (GEGKT), and Asp-515. Zn(2+) contacts are provided by Cys-916, Cys-918, Cys-927, and His-928.

This sequence belongs to the SecA family. As to quaternary structure, monomer and homodimer. Part of the essential Sec protein translocation apparatus which comprises SecA, SecYEG and auxiliary proteins SecDF-YajC and YidC. Zn(2+) is required as a cofactor.

The protein resides in the cell inner membrane. It is found in the cytoplasm. It carries out the reaction ATP + H2O + cellular proteinSide 1 = ADP + phosphate + cellular proteinSide 2.. Part of the Sec protein translocase complex. Interacts with the SecYEG preprotein conducting channel. Has a central role in coupling the hydrolysis of ATP to the transfer of proteins into and across the cell membrane, serving both as a receptor for the preprotein-SecB complex and as an ATP-driven molecular motor driving the stepwise translocation of polypeptide chains across the membrane. In Burkholderia multivorans (strain ATCC 17616 / 249), this protein is Protein translocase subunit SecA.